The chain runs to 227 residues: 4'-phosphopantetheinyl transferase PptT (227 aa).

Residues arginine 48, arginine 56, 75-78 (KGDK), 92-93 (TH), and aspartate 114 contribute to the CoA site. Mg(2+)-binding residues include aspartate 114, alanine 115, and glutamate 116. CoA-binding residues include glutamate 157, lysine 161, and leucine 171.

It belongs to the P-Pant transferase superfamily. The cofactor is Mg(2+).

It catalyses the reaction apo-[ACP] + CoA = holo-[ACP] + adenosine 3',5'-bisphosphate + H(+). With respect to regulation, inhibited by the amidino-urea compound 1-[(2,6-diethylphenyl)-3-N-ethylcarbamimodoyl]urea (compound 8918). It acts by binding to the phosphopantetheine pocket in the active site. Inhibition by compound 8918 kills M.tuberculosis. Its function is as follows. Transfers the 4'-phosphopantetheine moiety from coenzyme A to a Ser of acyl-carrier-protein. Involved in post-translational modification of various type-I polyketide synthases required for the formation of both mycolic acids and lipid virulence factors. Acts on Pks13, Mas, PpsA, PpsB, PpsC and PpsD. Also acts on AcpM, the meromycolate extension acyl carrier protein. In addition, is involved in the activation of the acyl carrier protein MbtL and the nonribosomal peptides synthases MbtB and MbtE, which are involved in the biosynthesis of the siderophore mycobactin. In terms of biological role, required for the replication and survival of Mycobacterium during the acute and chronic phases of infection in mice. The polypeptide is 4'-phosphopantetheinyl transferase PptT (Mycobacterium tuberculosis (strain ATCC 25618 / H37Rv)).